The following is a 319-amino-acid chain: MVEAVKVSELVKDLPSLRVVEGKEYLDQKLINTSDISRPGLELTGYFDFYPKNRIQLLGRTEISYSARLDHDLRERVFNKMATPETPCFIVSRGLPIPSEMLEAAEKEKIPVLSSNMATTHLSSVITQFLDEKLAPRKSIHGVLVEIYGMGVLIIGNSGVGKSETALDLVKRGHRLIADDRVDVYQKDDKTVVGEAPKILKHLMEIRGIGIIDVMNLFGAGAVKDSTEIQLIICLQNWDPKANYDRLGFNEKTREIFEVDVPQVTVPVKVGRNLAIIIEVAAMNFRAKKMGYDASQKFEQNLTELISDNSKKDEGDSRK.

Active-site residues include H141 and K162. 156–163 (GNSGVGKS) lines the ATP pocket. S163 serves as a coordination point for Mg(2+). D180 (proton acceptor; for phosphorylation activity. Proton donor; for dephosphorylation activity) is an active-site residue. An important for the catalytic mechanism of both phosphorylation and dephosphorylation region spans residues 204–213 (MEIRGIGIID). E205 is a Mg(2+) binding site. R246 is a catalytic residue. Residues 267–272 (PVKVGR) are important for the catalytic mechanism of dephosphorylation.

Belongs to the HPrK/P family. Homohexamer. Mg(2+) is required as a cofactor.

It carries out the reaction [HPr protein]-L-serine + ATP = [HPr protein]-O-phospho-L-serine + ADP + H(+). The enzyme catalyses [HPr protein]-O-phospho-L-serine + phosphate + H(+) = [HPr protein]-L-serine + diphosphate. Its function is as follows. Catalyzes the ATP- as well as the pyrophosphate-dependent phosphorylation of a specific serine residue in HPr, a phosphocarrier protein of the phosphoenolpyruvate-dependent sugar phosphotransferase system (PTS). HprK/P also catalyzes the pyrophosphate-producing, inorganic phosphate-dependent dephosphorylation (phosphorolysis) of seryl-phosphorylated HPr (P-Ser-HPr). The two antagonistic activities of HprK/P are regulated by several intracellular metabolites, which change their concentration in response to the absence or presence of rapidly metabolisable carbon sources (glucose, fructose, etc.) in the growth medium. Therefore, by controlling the phosphorylation state of HPr, HPrK/P is a sensor enzyme that plays a major role in the regulation of carbon metabolism and sugar transport: it mediates carbon catabolite repression (CCR), and regulates PTS-catalyzed carbohydrate uptake and inducer exclusion. This chain is HPr kinase/phosphorylase, found in Lactobacillus johnsonii (strain CNCM I-12250 / La1 / NCC 533).